The chain runs to 331 residues: Protein RecA (331 aa).

Residue Gly-66–Thr-73 coordinates ATP.

The protein belongs to the RecA family.

It localises to the cytoplasm. Functionally, can catalyze the hydrolysis of ATP in the presence of single-stranded DNA, the ATP-dependent uptake of single-stranded DNA by duplex DNA, and the ATP-dependent hybridization of homologous single-stranded DNAs. It interacts with LexA causing its activation and leading to its autocatalytic cleavage. The polypeptide is Protein RecA (Acholeplasma laidlawii).